A 1645-amino-acid chain; its full sequence is Protein MON2 homolog (1645 aa).

It belongs to the MON2 family.

Functionally, may be required for traffic between late Golgi and early endosomes. The chain is Protein MON2 homolog from Caenorhabditis briggsae.